The following is a 338-amino-acid chain: Aspartate carbamoyltransferase catalytic subunit (338 aa).

Positions 72 and 73 each coordinate carbamoyl phosphate. Lysine 100 provides a ligand contact to L-aspartate. Residues arginine 122, histidine 152, and glutamine 155 each coordinate carbamoyl phosphate. Arginine 186 and arginine 243 together coordinate L-aspartate. Glycine 284 and proline 285 together coordinate carbamoyl phosphate.

Belongs to the aspartate/ornithine carbamoyltransferase superfamily. ATCase family. In terms of assembly, heterododecamer (2C3:3R2) of six catalytic PyrB chains organized as two trimers (C3), and six regulatory PyrI chains organized as three dimers (R2).

It carries out the reaction carbamoyl phosphate + L-aspartate = N-carbamoyl-L-aspartate + phosphate + H(+). Its pathway is pyrimidine metabolism; UMP biosynthesis via de novo pathway; (S)-dihydroorotate from bicarbonate: step 2/3. Functionally, catalyzes the condensation of carbamoyl phosphate and aspartate to form carbamoyl aspartate and inorganic phosphate, the committed step in the de novo pyrimidine nucleotide biosynthesis pathway. In Acinetobacter baumannii (strain SDF), this protein is Aspartate carbamoyltransferase catalytic subunit.